Here is a 466-residue protein sequence, read N- to C-terminus: Cysteine--tRNA ligase (466 aa).

Cysteine 27 contributes to the Zn(2+) binding site. A 'HIGH' region motif is present at residues 29 to 39; sequence PTVYDLAHIGN. Residues cysteine 211, histidine 236, and glutamate 240 each contribute to the Zn(2+) site. The short motif at 270-274 is the 'KMSKS' region element; it reads KMSKS. Lysine 273 provides a ligand contact to ATP.

Belongs to the class-I aminoacyl-tRNA synthetase family. As to quaternary structure, monomer. Zn(2+) is required as a cofactor.

The protein resides in the cytoplasm. It catalyses the reaction tRNA(Cys) + L-cysteine + ATP = L-cysteinyl-tRNA(Cys) + AMP + diphosphate. This chain is Cysteine--tRNA ligase, found in Anaplasma marginale (strain St. Maries).